A 458-amino-acid polypeptide reads, in one-letter code: Enolase (458 aa).

A (2R)-2-phosphoglycerate-binding site is contributed by Gln177. The active-site Proton donor is Glu219. Mg(2+) is bound by residues Asp256, Glu310, and Asp337. Residues Lys362, Arg391, Ser392, and Lys413 each contribute to the (2R)-2-phosphoglycerate site. Catalysis depends on Lys362, which acts as the Proton acceptor.

This sequence belongs to the enolase family. Requires Mg(2+) as cofactor.

It localises to the cytoplasm. The protein resides in the secreted. It is found in the cell surface. The catalysed reaction is (2R)-2-phosphoglycerate = phosphoenolpyruvate + H2O. Its pathway is carbohydrate degradation; glycolysis; pyruvate from D-glyceraldehyde 3-phosphate: step 4/5. Functionally, catalyzes the reversible conversion of 2-phosphoglycerate (2-PG) into phosphoenolpyruvate (PEP). It is essential for the degradation of carbohydrates via glycolysis. The chain is Enolase from Mycoplasma genitalium (strain ATCC 33530 / DSM 19775 / NCTC 10195 / G37) (Mycoplasmoides genitalium).